A 252-amino-acid chain; its full sequence is GTP cyclohydrolase 1 type 2 homolog (252 aa).

Residues His-63, His-64, Asp-101, His-220, and Glu-224 each coordinate a divalent metal cation.

This sequence belongs to the GTP cyclohydrolase I type 2/NIF3 family. Homohexamer.

The sequence is that of GTP cyclohydrolase 1 type 2 homolog from Vibrio cholerae serotype O1 (strain ATCC 39315 / El Tor Inaba N16961).